The primary structure comprises 538 residues: Methionine--tRNA ligase (538 aa).

Positions 21–31 (YYVNDAPHLGH) match the 'HIGH' region motif. 4 residues coordinate Zn(2+): Cys-137, Cys-140, Cys-162, and His-165. The short motif at 313–317 (KMSKS) is the 'KMSKS' region element. Lys-316 contacts ATP.

The protein belongs to the class-I aminoacyl-tRNA synthetase family. MetG type 2A subfamily. In terms of assembly, monomer. Requires Zn(2+) as cofactor.

It is found in the cytoplasm. It carries out the reaction tRNA(Met) + L-methionine + ATP = L-methionyl-tRNA(Met) + AMP + diphosphate. Is required not only for elongation of protein synthesis but also for the initiation of all mRNA translation through initiator tRNA(fMet) aminoacylation. This is Methionine--tRNA ligase from Streptomyces coelicolor (strain ATCC BAA-471 / A3(2) / M145).